We begin with the raw amino-acid sequence, 449 residues long: Gamma-glutamyl phosphate reductase (449 aa).

This sequence belongs to the gamma-glutamyl phosphate reductase family.

Its subcellular location is the cytoplasm. The enzyme catalyses L-glutamate 5-semialdehyde + phosphate + NADP(+) = L-glutamyl 5-phosphate + NADPH + H(+). It participates in amino-acid biosynthesis; L-proline biosynthesis; L-glutamate 5-semialdehyde from L-glutamate: step 2/2. Catalyzes the NADPH-dependent reduction of L-glutamate 5-phosphate into L-glutamate 5-semialdehyde and phosphate. The product spontaneously undergoes cyclization to form 1-pyrroline-5-carboxylate. The protein is Gamma-glutamyl phosphate reductase of Methanococcoides burtonii (strain DSM 6242 / NBRC 107633 / OCM 468 / ACE-M).